Reading from the N-terminus, the 962-residue chain is MKYNPNEIDAKWQKNWANNQTFAASNTSIKPKYYILDMFPYPSGAGLHVGHPLGYIASDIVARFKRHKGFNVLHPQGYDSFGLPAEQYAIQTGQHPDKTTKENIARYREQLDKIGFSFDWSREIRTSNANYYKHTQWIFIQLFNSWYNKSNDKAEDITTLISLFQKEGNTNINAVCDDNIAPFSAQDWTGFSSSKQQKILLQYRLTYLAETEVNWCPGLGTVLANDEIINGVSERGGHPVIRKKMTQWSMRISAYAERLLQGLNDIDWSESIKESQRNWIGKSVGAMVSFKVKNQKSQVTSEATLSDLRPSTLDYIEVFTTRPDTIFGVTFMTLAPEHPLVQEITTPEQKAAIEAYIEKTAKRSERERMADVKTISGVFTGAYAEHPFTKEQIPVWIGDYVLAGYGTGAVMAVPCGDERDYAFANFFKGQNGMPEIKNIFDNVDIATEAYGSKDNVIIANSDFLNGLNYKQATKKAIAELETLNQGKGKTNYRLRDAVFSRQRYWGEPFPVYYVNGLPQMIDAKHLPIALPEVEKYLPTEDGLPPLGNSAKWAWNTITNEVDFNENINNTTIYPLELNTMPGWAGSSWYWMRYMDPHNDNEFASPEAIKYWESVDLYIGGSEHATGHLLYARFWNKFLKDKGYAPTEEPFKKLINQGMILGNSAFVYRSEDSKKLYSKGLISDKTTQAIHVDLAIINETTNELDIEAFKKHPLYSDYANAEFILENGKYIVGREVEKMSKSKYNVVNPDDICNEYGADTLRLYEMFLGPLEQSKPWNTAGITGVFGFLKKLWRLYFDDNGLIVTNNEPSKESLKSLHKTIKKVTEDIENFSFNTSVSQFMICVNELGTQNCHERAILEPLAIILSPYAPHIAEELWSQLGNSESISTVAFPICHEKYLVESDKEYPVSFNGKMKFTINLPLDLTPAQIEEIIMKDERTIKQLDGNTPKKVIIIPGKVINLVG.

The 'HIGH' region motif lies at 40–51; sequence PYPSGAGLHVGH. The 'KMSKS' region motif lies at 737 to 741; sequence KMSKS. ATP is bound at residue lysine 740.

This sequence belongs to the class-I aminoacyl-tRNA synthetase family.

The protein resides in the cytoplasm. The catalysed reaction is tRNA(Leu) + L-leucine + ATP = L-leucyl-tRNA(Leu) + AMP + diphosphate. This is Leucine--tRNA ligase from Flavobacterium psychrophilum (strain ATCC 49511 / DSM 21280 / CIP 103535 / JIP02/86).